The chain runs to 371 residues: uncharacterized protein (371 aa).

Residues 287-323 (EVVTALDRYRQHLRETRERLEEKQGKLLEELKGYESM) are a coiled coil.

This is an uncharacterized protein from Aspergillus fumigatus (strain ATCC MYA-4609 / CBS 101355 / FGSC A1100 / Af293) (Neosartorya fumigata).